Here is a 327-residue protein sequence, read N- to C-terminus: Phenylalanine--tRNA ligase alpha subunit (327 aa).

E252 serves as a coordination point for Mg(2+).

The protein belongs to the class-II aminoacyl-tRNA synthetase family. Phe-tRNA synthetase alpha subunit type 1 subfamily. As to quaternary structure, tetramer of two alpha and two beta subunits. It depends on Mg(2+) as a cofactor.

It is found in the cytoplasm. It carries out the reaction tRNA(Phe) + L-phenylalanine + ATP = L-phenylalanyl-tRNA(Phe) + AMP + diphosphate + H(+). This chain is Phenylalanine--tRNA ligase alpha subunit, found in Klebsiella pneumoniae (strain 342).